Reading from the N-terminus, the 208-residue chain is Large ribosomal subunit protein uL4 (208 aa).

Basic and acidic residues predominate over residues 47-58 (ARAARERSDVAR). The segment at 47-84 (ARAARERSDVARTGKKFGRQKGGGTARHGDRRAPIFIG) is disordered.

This sequence belongs to the universal ribosomal protein uL4 family. Part of the 50S ribosomal subunit.

Functionally, one of the primary rRNA binding proteins, this protein initially binds near the 5'-end of the 23S rRNA. It is important during the early stages of 50S assembly. It makes multiple contacts with different domains of the 23S rRNA in the assembled 50S subunit and ribosome. Its function is as follows. Forms part of the polypeptide exit tunnel. This Sphingopyxis alaskensis (strain DSM 13593 / LMG 18877 / RB2256) (Sphingomonas alaskensis) protein is Large ribosomal subunit protein uL4.